The sequence spans 682 residues: MSRKQLALFEPTLVVQALKEAVKKLNPQAQWRNPVMFIVWIGSLLTTCISIAMASGAMPGNALFSAAISGWLWITVLFANFAEALAEGRSKAQANSLKGVKKTAFARKLREPKYGAVADKVPADQLRKGDIVLVEAGDIIPCDGEVIEGGASVDESAITGESAPVIRESGGDFASVTGGTRILSDWLVIECSVNPGETFLDRMIAMVEGAQRRKTPNEIALTILLIALTIVFLLATATLWPFSAWGGNAVSVTVLVALLVCLIPTTIGGLLSAIGVAGMSRMLGANVIATSGRAVEAAGDVDVLLLDKTGTITLGNRQASEFIPAQGVDEKTLADAAQLASLADETPEGRSIVILAKQRFNLRERDVQSLHATFVPFTAQSRMSGINIDNRMIRKGSVDAIRRHVEANGGHFPTDVDQKVDQVARQGATPLVVVEGSRVLGVIALKDIVKGGIKERFAQLRKMGIKTVMITGDNRLTAAAIAAEAGVDDFLAEATPEAKLALIRQYQAEGRLVAMTGDGTNDAPALAQADVAVAMNSGTQAAKEAGNMVDLDSNPTKLIEVVHIGKQMLMTRGSLTTFSIANDVAKYFAIIPAAFAATYPQLNALNIMCLHSPDSAILSAVIFNALIIVFLIPLALKGVSYKPLTASAMLRRNLWIYGLGGLLVPFIGIKVIDLLLTVCSLV.

The next 4 helical transmembrane spans lie at 34 to 54, 62 to 82, 219 to 239, and 254 to 274; these read PVMF…IAMA, ALFS…ANFA, IALT…TATL, and VLVA…LSAI. Residue D307 is the 4-aspartylphosphate intermediate of the active site. Residues D344, E348, 377-384, and K395 contribute to the ATP site; that span reads FTAQSRMS. Mg(2+)-binding residues include D518 and D522. The next 3 membrane-spanning stretches (helical) occupy residues 588 to 608, 616 to 636, and 656 to 676; these read FAII…LNIM, AILS…PLAL, and IYGL…DLLL.

Belongs to the cation transport ATPase (P-type) (TC 3.A.3) family. Type IA subfamily. The system is composed of three essential subunits: KdpA, KdpB and KdpC.

It is found in the cell inner membrane. The enzyme catalyses K(+)(out) + ATP + H2O = K(+)(in) + ADP + phosphate + H(+). Its function is as follows. Part of the high-affinity ATP-driven potassium transport (or Kdp) system, which catalyzes the hydrolysis of ATP coupled with the electrogenic transport of potassium into the cytoplasm. This subunit is responsible for energy coupling to the transport system and for the release of the potassium ions to the cytoplasm. In Escherichia coli (strain ATCC 8739 / DSM 1576 / NBRC 3972 / NCIMB 8545 / WDCM 00012 / Crooks), this protein is Potassium-transporting ATPase ATP-binding subunit.